The sequence spans 617 residues: uncharacterized protein (617 aa).

Low complexity-rich tracts occupy residues 1–16 (MSKC…SNSS) and 36–45 (STTSSNGSNS). Positions 1–49 (MSKCATPTPSTSSNSSDEAKRSPQPMSRGFPQRNMSTTSSNGSNSPRHR) are disordered. 3 consecutive transmembrane segments (helical) span residues 219-239 (LMIG…GGLA), 262-282 (TAGA…FTGY), and 427-447 (PITL…LLTM).

The protein belongs to the TMCO4 family.

It localises to the membrane. This is an uncharacterized protein from Caenorhabditis elegans.